We begin with the raw amino-acid sequence, 452 residues long: MATTFLQTSSTFGGSSTRGASLRAGGGSFGGGSLYGGGGSRSISASSARFVSSGAGGGFGGGMSCGFGGGFGGGFGGGFGGGFGDFGGGDGGLLSGNEKVTMQNLNDRLASYLDKVRALEQANTELEVKIRDWYQKQSPASPDRDYSHYFKTMEEIRDKILAATIDNSRVVLEIDNARLAADDFRLKYENELTLRQGVEADINGLRRVLDELTLARTDLEMQIEQLNEELAYLKKNHEEEMKEFSSQLAGQVNVEMDAAPGVDLTRMLAEMREQYEAIAEKNRRDVEAWFFSKTEELNKEVASNTEMIQTSKTEITDLRRTLQGLEIELQSQLSMKAGLENSLAEVECRYATQLQQIQGVITGLETQLSELRCEMEAQNQEYNMLLDIKTRLEQEIATYRNLLEGQDAKMAGIGVREGSSGGGGSSSSSSNFHISVEESVDGKVVSSRKREI.

The segment at 1–97 (MATTFLQTSS…GGDGGLLSGN (97 aa)) is head. Phosphoserine is present on residues Ser-15, Ser-16, Ser-28, Ser-33, and Ser-47. A coil 1A region spans residues 98–133 (EKVTMQNLNDRLASYLDKVRALEQANTELEVKIRDW). An IF rod domain is found at 98–410 (EKVTMQNLND…NLLEGQDAKM (313 aa)). Thr-124 carries the post-translational modification Phosphothreonine. The tract at residues 134-152 (YQKQSPASPDRDYSHYFKT) is linker 1. Residues 153 to 244 (MEEIRDKILA…KNHEEEMKEF (92 aa)) form a coil 1B region. Residues 245–264 (SSQLAGQVNVEMDAAPGVDL) form a linker 12 region. The coil 2 stretch occupies residues 265–406 (TRMLAEMREQ…ATYRNLLEGQ (142 aa)). Lys-293 participates in a covalent cross-link: Glycyl lysine isopeptide (Lys-Gly) (interchain with G-Cter in SUMO2). Residues Thr-294 and Thr-316 each carry the phosphothreonine modification. Residues 407–452 (DAKMAGIGVREGSSGGGGSSSSSSNFHISVEESVDGKVVSSRKREI) form a tail region. A disordered region spans residues 413 to 452 (IGVREGSSGGGGSSSSSSNFHISVEESVDGKVVSSRKREI). Lys-443 is covalently cross-linked (Glycyl lysine isopeptide (Lys-Gly) (interchain with G-Cter in SUMO1); alternate). Lys-443 is covalently cross-linked (Glycyl lysine isopeptide (Lys-Gly) (interchain with G-Cter in SUMO2); alternate).

The protein belongs to the intermediate filament family. As to quaternary structure, heterotetramer of two type I and two type II keratins. Forms a heterodimer with KRT14. Interacts with PLEC isoform 1C, when in a heterodimer with KRT14. Interacts with NOD2. In terms of tissue distribution, expressed strongly in the basal cell layer at the tips of rete-like prominences (RLPs) of adult dorsal tongue, outer root sheath (ORS) of hair follicle and skin epidermis (at protein level).

In terms of biological role, in the absence of KRT14, makes a bona fide, but ultrastructurally distinct keratin filament network with KRT5. The chain is Keratin, type I cytoskeletal 15 (Krt15) from Mus musculus (Mouse).